Consider the following 181-residue polypeptide: Translation initiation factor IF-3 (181 aa).

This sequence belongs to the IF-3 family. In terms of assembly, monomer.

It localises to the cytoplasm. IF-3 binds to the 30S ribosomal subunit and shifts the equilibrium between 70S ribosomes and their 50S and 30S subunits in favor of the free subunits, thus enhancing the availability of 30S subunits on which protein synthesis initiation begins. This is Translation initiation factor IF-3 from Pseudoalteromonas translucida (strain TAC 125).